The following is a 667-amino-acid chain: UvrABC system protein B (667 aa).

A Helicase ATP-binding domain is found at 24-195 (EGLRRGDRFQ…SSGGVFHLRG (172 aa)). 37–44 (GVTGSGKT) lines the ATP pocket. Residues 90-113 (YYDYYQPEAYIPTKDLYIEKDADI) carry the Beta-hairpin motif. In terms of domain architecture, Helicase C-terminal spans 428 to 581 (QVDDFIEEVQ…QLMYNIEHDI (154 aa)). Residues 626 to 661 (EEYLALLEEEMWRASSELRYEDAAMLRDEMLRIKRE) form the UVR domain.

The protein belongs to the UvrB family. As to quaternary structure, forms a heterotetramer with UvrA during the search for lesions. Interacts with UvrC in an incision complex.

It is found in the cytoplasm. Functionally, the UvrABC repair system catalyzes the recognition and processing of DNA lesions. A damage recognition complex composed of 2 UvrA and 2 UvrB subunits scans DNA for abnormalities. Upon binding of the UvrA(2)B(2) complex to a putative damaged site, the DNA wraps around one UvrB monomer. DNA wrap is dependent on ATP binding by UvrB and probably causes local melting of the DNA helix, facilitating insertion of UvrB beta-hairpin between the DNA strands. Then UvrB probes one DNA strand for the presence of a lesion. If a lesion is found the UvrA subunits dissociate and the UvrB-DNA preincision complex is formed. This complex is subsequently bound by UvrC and the second UvrB is released. If no lesion is found, the DNA wraps around the other UvrB subunit that will check the other stand for damage. The sequence is that of UvrABC system protein B from Kosmotoga olearia (strain ATCC BAA-1733 / DSM 21960 / TBF 19.5.1).